The chain runs to 430 residues: C4-dicarboxylate transport protein (430 aa).

9 consecutive transmembrane segments (helical) span residues 8 to 28 (SLYF…HFYP), 44 to 64 (LIKM…IAGM), 76 to 96 (AALL…LVVV), 144 to 164 (AFAS…GFAL), 184 to 204 (VIFG…FGAM), 222 to 242 (LILC…GSIA), 289 to 309 (VVGL…SIYL), 326 to 346 (IWHQ…AAGV), and 352 to 372 (IVLA…LALI).

This sequence belongs to the dicarboxylate/amino acid:cation symporter (DAACS) (TC 2.A.23) family.

The protein resides in the cell inner membrane. Functionally, responsible for the transport of dicarboxylates such as succinate, fumarate, and malate from the periplasm across the membrane. This is C4-dicarboxylate transport protein from Pectobacterium atrosepticum (strain SCRI 1043 / ATCC BAA-672) (Erwinia carotovora subsp. atroseptica).